The following is a 100-amino-acid chain: Acylphosphatase (100 aa).

The 87-residue stretch at 14–100 (RLSAWVHGHV…RGDLTGFEER (87 aa)) folds into the Acylphosphatase-like domain. Residues Arg29 and Asn47 contribute to the active site.

The protein belongs to the acylphosphatase family.

The enzyme catalyses an acyl phosphate + H2O = a carboxylate + phosphate + H(+). The protein is Acylphosphatase (acyP) of Nocardia farcinica (strain IFM 10152).